Here is a 671-residue protein sequence, read N- to C-terminus: MASGGSGGVSVPALWSEVNRYGQNGDFTRALKTVNKILQINKDDVTALHCKVVCLIQNGSFKEALNVINTHTKVLANNSLSFEKAYCEYRLNRIENALKTIESANQQTDKLKELYGQVLYRLERYDECLAVYRDLVRNSQDDYDEERKTNLSAVVAAQSNWEKVVPENLGLQEGTHELCYNAACALIGQGQLSQAMKILQKAEDLCRRSLSEDSDGTEEDPQAELAIIHGQMAYILQLQGRTEEALQLYNQIIKLKPTDVGLLAVIANNIITINKDQNVFDSKKKVKLTNAEGVEFKLSKKQLQAIEFNKALLAMYTNQAEQCRKISASLQSQSPEHLLPVLIQAAQLCREKQHTKAIELLQEFSDQHPENAAEIKLTMAQLKISQGNISKACLILRSIEELKHKPGMVSALVTMYSHEEDIDSAIEVFTQAIQWYQNHQPKSSAHLSLIREAANFKLKYGRKKEAISDLEQLWKQNPKDIHTLAQLISAYSLVDPEKAKALSKHLPSSDSMSLKVDVEALENSPGATYIRKKGGKVAGDSQPKEQGQGDLKKKKKKKKGKLPKNYDPKVTPDPERWLPMRERSYYRGRKKGKKKDQIGKGTQGATAGASSELDASKTVSSPPTSPRPGSAATASASTSNIIPPRHQKPAGAPATKKKQQQKKKKGGKGGW.

Residue A2 is modified to Blocked amino end (Ala); alternate. Position 2 is an N-acetylalanine; alternate (A2). The required for interaction with SRP68 stretch occupies residues 9-163; that stretch reads VSVPALWSEV…VVAAQSNWEK (155 aa). TPR repeat units lie at residues 11-44, 109-142, and 226-259; these read VPAL…NKDD, DKLK…SQDD, and AIIH…KPTD. The interval 379–509 is required for the interaction with the SRP68/7SL RNA complex; the sequence is MAQLKISQGN…KALSKHLPSS (131 aa). Residue K391 forms a Glycyl lysine isopeptide (Lys-Gly) (interchain with G-Cter in SUMO1); alternate linkage. A Glycyl lysine isopeptide (Lys-Gly) (interchain with G-Cter in SUMO2); alternate cross-link involves residue K391. TPR repeat units lie at residues 406-439 and 447-480; these read PGMV…YQNH and LSLI…NPKD. Residues 527 to 671 are disordered; it reads ATYIRKKGGK…KKKKGGKGGW (145 aa). The interval 545-617 is RNA-binding; that stretch reads EQGQGDLKKK…GASSELDASK (73 aa). Over residues 552 to 562 the composition is skewed to basic residues; sequence KKKKKKKKGKL. Over residues 564-585 the composition is skewed to basic and acidic residues; it reads KNYDPKVTPDPERWLPMRERSY. Phosphothreonine occurs at positions 571 and 618. Positions 616–639 are enriched in low complexity; the sequence is SKTVSSPPTSPRPGSAATASASTS. S630 and S635 each carry phosphoserine. A compositionally biased stretch (basic residues) spans 655 to 671; sequence TKKKQQQKKKKGGKGGW.

It belongs to the SRP72 family. Heterodimer with SRP68. SRP68-SRP72 heterodimer formation is stabilized by the presence of 7SL RNA. Component of a signal recognition particle consisting of a 7SL RNA molecule of 300 nucleotides and six protein subunits: SRP72, SRP68, SRP54, SRP19, SRP14 and SRP9. Within the SRP complex, interacts with SRP68 (via C-terminus).

It localises to the cytoplasm. The protein resides in the endoplasmic reticulum. Its function is as follows. Component of the signal recognition particle (SRP) complex, a ribonucleoprotein complex that mediates the cotranslational targeting of secretory and membrane proteins to the endoplasmic reticulum (ER). The SRP complex interacts with the signal sequence in nascent secretory and membrane proteins and directs them to the membrane of the ER. The SRP complex targets the ribosome-nascent chain complex to the SRP receptor (SR), which is anchored in the ER, where SR compaction and GTPase rearrangement drive cotranslational protein translocation into the ER. Binds the signal recognition particle RNA (7SL RNA) in presence of SRP68. Can bind 7SL RNA with low affinity. The SRP complex possibly participates in the elongation arrest function. This Canis lupus familiaris (Dog) protein is Signal recognition particle subunit SRP72 (SRP72).